A 188-amino-acid chain; its full sequence is Peptide deformylase (188 aa).

Cys-109 and His-152 together coordinate Fe cation. Glu-153 is an active-site residue. His-156 provides a ligand contact to Fe cation.

This sequence belongs to the polypeptide deformylase family. The cofactor is Fe(2+).

The enzyme catalyses N-terminal N-formyl-L-methionyl-[peptide] + H2O = N-terminal L-methionyl-[peptide] + formate. Removes the formyl group from the N-terminal Met of newly synthesized proteins. Requires at least a dipeptide for an efficient rate of reaction. N-terminal L-methionine is a prerequisite for activity but the enzyme has broad specificity at other positions. The polypeptide is Peptide deformylase (Chloroflexus aurantiacus (strain ATCC 29366 / DSM 635 / J-10-fl)).